We begin with the raw amino-acid sequence, 743 residues long: Dynein regulatory complex protein 1 homolog (743 aa).

Composition is skewed to acidic residues over residues 1–10 (MDDNEDELEE) and 19–28 (SVEEEEEVEP). The segment at 1–34 (MDDNEDELEEHQELVSDGSVEEEEEVEPDLGPVD) is disordered. Coiled coils occupy residues 175–332 (DQIE…VLMN) and 395–416 (KLHS…NNRE). Positions 599 to 620 (NRLQGAAGGQPDEKEHRSTGDT) are disordered. Positions 715–742 (KMRVQYDAEVVFLRRQNEELRHLLQKFT) form a coiled coil.

Belongs to the DRC1 family.

The chain is Dynein regulatory complex protein 1 homolog from Drosophila melanogaster (Fruit fly).